The sequence spans 215 residues: Ribosomal RNA small subunit methyltransferase G (215 aa).

S-adenosyl-L-methionine contacts are provided by residues Gly78, Leu83, 128–129 (AE), and Arg146.

The protein belongs to the methyltransferase superfamily. RNA methyltransferase RsmG family.

The protein resides in the cytoplasm. It carries out the reaction guanosine(527) in 16S rRNA + S-adenosyl-L-methionine = N(7)-methylguanosine(527) in 16S rRNA + S-adenosyl-L-homocysteine. Functionally, specifically methylates the N7 position of guanine in position 527 of 16S rRNA. This is Ribosomal RNA small subunit methyltransferase G from Anaeromyxobacter dehalogenans (strain 2CP-1 / ATCC BAA-258).